The chain runs to 312 residues: Borealin-2 (312 aa).

Basic residues predominate over residues 1 to 10 (MPPRKAPAKR). The tract at residues 1–26 (MPPRKAPAKRRSTDSGVERDRGALSQ) is disordered. Over residues 11–26 (RSTDSGVERDRGALSQ) the composition is skewed to basic and acidic residues.

It belongs to the borealin family. In terms of assembly, component of the CPC complex.

It is found in the nucleus. It localises to the chromosome. Its subcellular location is the centromere. Its function is as follows. Component of the chromosomal passenger complex (CPC), a complex that acts as a key regulator of mitosis. The CPC complex has essential functions at the centromere in ensuring correct chromosome alignment and segregation and is required for chromatin-induced microtubule stabilization and spindle assembly. The sequence is that of Borealin-2 from Gallus gallus (Chicken).